The chain runs to 565 residues: Proline--tRNA ligase (565 aa).

This sequence belongs to the class-II aminoacyl-tRNA synthetase family. ProS type 1 subfamily. In terms of assembly, homodimer.

It localises to the cytoplasm. The catalysed reaction is tRNA(Pro) + L-proline + ATP = L-prolyl-tRNA(Pro) + AMP + diphosphate. Its function is as follows. Catalyzes the attachment of proline to tRNA(Pro) in a two-step reaction: proline is first activated by ATP to form Pro-AMP and then transferred to the acceptor end of tRNA(Pro). As ProRS can inadvertently accommodate and process non-cognate amino acids such as alanine and cysteine, to avoid such errors it has two additional distinct editing activities against alanine. One activity is designated as 'pretransfer' editing and involves the tRNA(Pro)-independent hydrolysis of activated Ala-AMP. The other activity is designated 'posttransfer' editing and involves deacylation of mischarged Ala-tRNA(Pro). The misacylated Cys-tRNA(Pro) is not edited by ProRS. The polypeptide is Proline--tRNA ligase (Campylobacter lari (strain RM2100 / D67 / ATCC BAA-1060)).